Here is a 108-residue protein sequence, read N- to C-terminus: Parvalbumin beta 2 (108 aa).

Residue alanine 1 is modified to N-acetylalanine. EF-hand domains follow at residues 38–73 and 77–108; these read KSAA…FSAG and LTDA…MVKG. 11 residues coordinate Ca(2+): aspartate 51, aspartate 53, serine 55, phenylalanine 57, glutamate 59, glutamate 62, aspartate 90, aspartate 92, aspartate 94, lysine 96, and glutamate 101.

It belongs to the parvalbumin family.

In terms of biological role, in muscle, parvalbumin is thought to be involved in relaxation after contraction. It binds two calcium ions. The protein is Parvalbumin beta 2 of Merluccius bilinearis (Silver hake).